The primary structure comprises 432 residues: Putative D-alanyl-D-alanine carboxypeptidase (432 aa).

The helical; Signal-anchor transmembrane segment at 7-25 threads the bilayer; it reads ATVLLTFSLSAFAVEYPVL.

This sequence belongs to the peptidase S12 family. YfeW subfamily.

The protein localises to the cell inner membrane. It carries out the reaction Preferential cleavage: (Ac)2-L-Lys-D-Ala-|-D-Ala. Also transpeptidation of peptidyl-alanyl moieties that are N-acyl substituents of D-alanine.. This Salmonella gallinarum (strain 287/91 / NCTC 13346) protein is Putative D-alanyl-D-alanine carboxypeptidase.